A 709-amino-acid chain; its full sequence is Anillin-like protein 3 (709 aa).

The PH domain maps to 584–705; that stretch reads DMEYRGFLHI…WLSAINDTLD (122 aa).

The sequence is that of Anillin-like protein 3 (ani-3) from Caenorhabditis elegans.